Here is a 269-residue protein sequence, read N- to C-terminus: Flagellar hook-basal body complex protein FlhP (269 aa).

A coiled-coil region spans residues 7–65; sequence TASTTLNQLQQQIDTISSNLSNSNTTGYKAKDTNFSELVRQQFDQVDEKNEEVAKARKT.

Belongs to the flagella basal body rod proteins family.

The protein is Flagellar hook-basal body complex protein FlhP (flhP) of Bacillus subtilis (strain 168).